Reading from the N-terminus, the 140-residue chain is Putative pre-16S rRNA nuclease (140 aa).

The protein belongs to the YqgF nuclease family.

Its subcellular location is the cytoplasm. Its function is as follows. Could be a nuclease involved in processing of the 5'-end of pre-16S rRNA. This chain is Putative pre-16S rRNA nuclease, found in Parabacteroides distasonis (strain ATCC 8503 / DSM 20701 / CIP 104284 / JCM 5825 / NCTC 11152).